A 537-amino-acid chain; its full sequence is MANGIKKVEHLYRSKLPDIEISDHLPLHSYCFERVAEFADRPCLIDGATDRTYCFSEVELISRKVAAGLAKLGLQQGQVVMLLLPNCIEFAFVFMGASVRGAIVTTANPFYKPGEIAKQAKAAGARIIVTLAAYVEKLADLQSHDVLVITIDDAPKEGCQHISVLTEADETQCPAVKIHPDDVVALPYSSGTTGLPKGVMLTHKGLVSSVAQQVDGENPNLYFHSDDVILCVLPLFHIYSLNSVLLCALRAGAATLIMQKFNLTTCLELIQKYKVTVAPIVPPIVLDITKSPIVSQYDVSSVRIIMSGAAPLGKELEDALRERFPKAIFGQGYGMTEAGPVLAMNLAFAKNPFPVKSGSCGTVVRNAQIKILDTETGESLPHNQAGEICIRGPEIMKGYINDPESTAATIDEEGWLHTGDVEYIDDDEEIFIVDRVKEIIKYKGFQVAPAELEALLVAHPSIADAAVVPQKHEEAGEVPVAFVVKSSEISEQEIKEFVAKQVIFYKKIHRVYFVDAIPKSPSGKILRKDLRSRLAAK.

Residues Ser-189, Ser-190, Gly-191, Thr-192, Thr-193, and Lys-197 each coordinate ATP. Residues Tyr-239 and Ser-243 each coordinate (E)-4-coumaroyl-AMP. Lys-260 is a CoA binding site. The SBD1 stretch occupies residues 262–331 (NLTTCLELIQ…ERFPKAIFGQ (70 aa)). 5 residues coordinate (E)-4-coumaroyl-AMP: Ala-309, Gln-331, Gly-332, Thr-336, and Met-344. 3 residues coordinate ATP: Gln-331, Gly-332, and Thr-336. The SBD2 stretch occupies residues 332 to 399 (GYGMTEAGPV…IRGPEIMKGY (68 aa)). ATP contacts are provided by Asp-420 and Arg-435. 2 residues coordinate (E)-4-coumaroyl-AMP: Lys-437 and Lys-441. The CoA site is built by Lys-443 and Gly-444. Lys-524 serves as a coordination point for ATP.

Belongs to the ATP-dependent AMP-binding enzyme family. Mg(2+) serves as cofactor.

The enzyme catalyses (E)-4-coumarate + ATP + CoA = (E)-4-coumaroyl-CoA + AMP + diphosphate. The catalysed reaction is (E)-4-coumarate + ATP + H(+) = (E)-4-coumaroyl-AMP + diphosphate. It carries out the reaction (E)-4-coumaroyl-AMP + CoA = (E)-4-coumaroyl-CoA + AMP + H(+). The protein operates within phytoalexin biosynthesis; 3,4',5-trihydroxystilbene biosynthesis; 3,4',5-trihydroxystilbene from trans-4-coumarate: step 1/2. Its function is as follows. Carboxylate--CoA ligase that may use 4-coumarate as substrate. Follows a two-step reaction mechanism, wherein the carboxylate substrate first undergoes adenylation by ATP, followed by a thioesterification in the presence of CoA to yield the final CoA thioester. This chain is 4-coumarate--CoA ligase (4CL), found in Pinus taeda (Loblolly pine).